The primary structure comprises 138 residues: ATP synthase epsilon chain (138 aa).

This sequence belongs to the ATPase epsilon chain family. F-type ATPases have 2 components, CF(1) - the catalytic core - and CF(0) - the membrane proton channel. CF(1) has five subunits: alpha(3), beta(3), gamma(1), delta(1), epsilon(1). CF(0) has three main subunits: a, b and c.

The protein resides in the cell membrane. Functionally, produces ATP from ADP in the presence of a proton gradient across the membrane. The protein is ATP synthase epsilon chain of Streptococcus pyogenes serotype M3 (strain ATCC BAA-595 / MGAS315).